The primary structure comprises 48 residues: MSLFCLPLEMRNHWHFFSLFTNLPRKSKWHRASEFFFPLLMSEIEDFR.

This is an uncharacterized protein from Saccharomyces cerevisiae (strain ATCC 204508 / S288c) (Baker's yeast).